A 318-amino-acid polypeptide reads, in one-letter code: NADH-ubiquinone oxidoreductase chain 1 (318 aa).

8 consecutive transmembrane segments (helical) span residues 3-23 (LINV…LTLL), 69-89 (LMFT…WIPI), 100-120 (LGVL…LWSG), 135-155 (AVAQ…SIMM), 171-191 (HMWL…STLA), 223-243 (FFLA…ILFF), 253-273 (ELHT…FLWV), and 293-313 (FLPL…TFAG).

The protein belongs to the complex I subunit 1 family.

It is found in the mitochondrion inner membrane. It carries out the reaction a ubiquinone + NADH + 5 H(+)(in) = a ubiquinol + NAD(+) + 4 H(+)(out). Its function is as follows. Core subunit of the mitochondrial membrane respiratory chain NADH dehydrogenase (Complex I) that is believed to belong to the minimal assembly required for catalysis. Complex I functions in the transfer of electrons from NADH to the respiratory chain. The immediate electron acceptor for the enzyme is believed to be ubiquinone. This Dasypus novemcinctus (Nine-banded armadillo) protein is NADH-ubiquinone oxidoreductase chain 1 (MT-ND1).